The following is a 594-amino-acid chain: Bifunctional lycopene cyclase/phytoene synthase (594 aa).

The segment at 1–249 is lycopene beta-cyclase; it reads MGLDYLMVHV…VVFGIAAMHN (249 aa). A run of 7 helical transmembrane segments spans residues 3-23, 35-55, 77-97, 130-150, 153-173, 176-196, and 227-247; these read LDYL…LTIL, KIVL…SYLI, LEEV…YIIF, LGTL…YIGG, MYLG…WVLM, FLLA…TLYL, and IEEA…IAAM. Positions 256-594 are phytoene synthase; that stretch reads YKAFISTTAM…RFKRAWLAML (339 aa).

It in the N-terminal section; belongs to the lycopene beta-cyclase family. This sequence in the C-terminal section; belongs to the phytoene/squalene synthase family.

It localises to the membrane. The catalysed reaction is all-trans-lycopene = gamma-carotene. It carries out the reaction gamma-carotene = all-trans-beta-carotene. It catalyses the reaction 2 (2E,6E,10E)-geranylgeranyl diphosphate = 15-cis-phytoene + 2 diphosphate. It participates in carotenoid biosynthesis; beta-carotene biosynthesis. It functions in the pathway carotenoid biosynthesis; phytoene biosynthesis; all-trans-phytoene from geranylgeranyl diphosphate: step 1/1. In terms of biological role, bifunctional enzyme that catalyzes the reactions from geranylgeranyl diphosphate to phytoene (phytoene synthase) and lycopene to beta-carotene via the intermediate gamma-carotene (lycopene cyclase). The polypeptide is Bifunctional lycopene cyclase/phytoene synthase (Arthroderma gypseum (strain ATCC MYA-4604 / CBS 118893) (Microsporum gypseum)).